The following is a 434-amino-acid chain: Chaperone SurA (434 aa).

Residues 1-29 (MKTLRLNFRSAILKALGALLLLQGCLAHA) form the signal peptide. 2 PpiC domains span residues 180–281 (AEEY…AMLE) and 290–389 (VEQS…QVQD).

The protein localises to the periplasm. It carries out the reaction [protein]-peptidylproline (omega=180) = [protein]-peptidylproline (omega=0). Chaperone involved in the correct folding and assembly of outer membrane proteins. Recognizes specific patterns of aromatic residues and the orientation of their side chains, which are found more frequently in integral outer membrane proteins. May act in both early periplasmic and late outer membrane-associated steps of protein maturation. The sequence is that of Chaperone SurA from Hahella chejuensis (strain KCTC 2396).